Here is a 493-residue protein sequence, read N- to C-terminus: Probable cytosol aminopeptidase (493 aa).

Mn(2+)-binding residues include Lys256 and Asp261. Lys268 is an active-site residue. Asp279, Asp338, and Glu340 together coordinate Mn(2+). Residue Arg342 is part of the active site.

It belongs to the peptidase M17 family. Requires Mn(2+) as cofactor.

The protein resides in the cytoplasm. The enzyme catalyses Release of an N-terminal amino acid, Xaa-|-Yaa-, in which Xaa is preferably Leu, but may be other amino acids including Pro although not Arg or Lys, and Yaa may be Pro. Amino acid amides and methyl esters are also readily hydrolyzed, but rates on arylamides are exceedingly low.. It catalyses the reaction Release of an N-terminal amino acid, preferentially leucine, but not glutamic or aspartic acids.. Its function is as follows. Presumably involved in the processing and regular turnover of intracellular proteins. Catalyzes the removal of unsubstituted N-terminal amino acids from various peptides. The sequence is that of Probable cytosol aminopeptidase from Phytoplasma australiense.